A 496-amino-acid chain; its full sequence is Cytochrome P450 71D180 (496 aa).

The helical; Signal-anchor for type II membrane protein transmembrane segment at 1–21 (MDISISWVVIIVFVLSYLILM) threads the bilayer. A heme-binding site is contributed by Cys-435.

The protein belongs to the cytochrome P450 family. Heme is required as a cofactor. In terms of tissue distribution, mostly expressed in flowers and, to a lower extent, in leaves, especially in glandular trichomes.

It localises to the membrane. The catalysed reaction is (4R)-limonene + reduced [NADPH--hemoprotein reductase] + O2 = (1R,5S)-carveol + oxidized [NADPH--hemoprotein reductase] + H2O + H(+). It catalyses the reaction (4S)-limonene + reduced [NADPH--hemoprotein reductase] + O2 = (1S,5R)-carveol + oxidized [NADPH--hemoprotein reductase] + H2O + H(+). It carries out the reaction gamma-terpinene + 2 reduced [NADPH--hemoprotein reductase] + 2 O2 = carvacrol + 2 oxidized [NADPH--hemoprotein reductase] + 3 H2O + 2 H(+). It participates in secondary metabolite biosynthesis; terpenoid biosynthesis. Involved in the biosynthesis of phenolic monoterpenes natural products thymol and carvacrol which have a broad range of biological activities acting as antimicrobial compounds, insecticides, antioxidants and pharmaceutical agents. Catalyzes the C2-hydroxylation of gamma-terpinene to produce carvacrol. Mediates also the C6-hydroxylation of (4S)-limonene and (4R)-limonene to form carveol. The chain is Cytochrome P450 71D180 from Thymus vulgaris (Thyme).